The primary structure comprises 364 residues: Mitogen-activated protein kinase 11 (364 aa).

Positions 24–308 (LQGLRPVGSG…AAEALAHAYF (285 aa)) constitute a Protein kinase domain. Residues 30–38 (VGSGAYGSV) and Lys53 each bind ATP. Residue Glu71 participates in nilotinib binding. The active-site Proton acceptor is the Asp150. A Phosphothreonine; by MAP2K3, MAP2K4 and MAP2K6 modification is found at Thr180. The TXY signature appears at 180–182 (TGY). Tyr182 bears the Phosphotyrosine; by MAP2K3, MAP2K4 and MAP2K6 mark. Disordered regions lie at residues 311–331 (YHDP…EAKE) and 343–364 (QEVL…EIEQ). A compositionally biased stretch (acidic residues) spans 314–326 (PEDEPEAEPYDES). Tyr323 is modified (phosphotyrosine; by ZAP70).

It belongs to the protein kinase superfamily. CMGC Ser/Thr protein kinase family. MAP kinase subfamily. Interacts with HDAC3 and DUSP16. The cofactor is Mg(2+). Post-translationally, dually phosphorylated on Thr-180 and Tyr-182 by MAP2K3/MKK3, MAP2K4/MKK4 and MAP2K6/MKK6, which activates the enzyme. Highest levels in the brain and heart. Also expressed in the placenta, lung, liver, skeletal muscle, kidney and pancreas.

Its subcellular location is the cytoplasm. It localises to the nucleus. It catalyses the reaction L-seryl-[protein] + ATP = O-phospho-L-seryl-[protein] + ADP + H(+). The enzyme catalyses L-threonyl-[protein] + ATP = O-phospho-L-threonyl-[protein] + ADP + H(+). With respect to regulation, activated by phosphorylation on threonine and tyrosine by MAP2K3/MKK3, MAP2K4/MKK4 and MAP2K6/MKK6. MAP2K3/MKK3 and MAP2K6/MKK6 are both essential for the activation of MAPK11 induced by environmental stress. HDAC3 interacts directly and selectively with MAPK11 to repress ATF2 transcriptional activity, and regulate TNF gene expression in LPS-stimulated cells. Inhibited by SB203580 and pyridinyl-imidazole related compounds. Functionally, serine/threonine kinase which acts as an essential component of the MAP kinase signal transduction pathway. MAPK11 is one of the four p38 MAPKs which play an important role in the cascades of cellular responses evoked by extracellular stimuli such as pro-inflammatory cytokines or physical stress leading to direct activation of transcription factors. Accordingly, p38 MAPKs phosphorylate a broad range of proteins and it has been estimated that they may have approximately 200 to 300 substrates each. MAPK11 functions are mostly redundant with those of MAPK14. Some of the targets are downstream kinases which are activated through phosphorylation and further phosphorylate additional targets. RPS6KA5/MSK1 and RPS6KA4/MSK2 can directly phosphorylate and activate transcription factors such as CREB1, ATF1, the NF-kappa-B isoform RELA/NFKB3, STAT1 and STAT3, but can also phosphorylate histone H3 and the nucleosomal protein HMGN1. RPS6KA5/MSK1 and RPS6KA4/MSK2 play important roles in the rapid induction of immediate-early genes in response to stress or mitogenic stimuli, either by inducing chromatin remodeling or by recruiting the transcription machinery. On the other hand, two other kinase targets, MAPKAPK2/MK2 and MAPKAPK3/MK3, participate in the control of gene expression mostly at the post-transcriptional level, by phosphorylating ZFP36 (tristetraprolin) and ELAVL1, and by regulating EEF2K, which is important for the elongation of mRNA during translation. MKNK1/MNK1 and MKNK2/MNK2, two other kinases activated by p38 MAPKs, regulate protein synthesis by phosphorylating the initiation factor EIF4E2. In the cytoplasm, the p38 MAPK pathway is an important regulator of protein turnover. For example, CFLAR is an inhibitor of TNF-induced apoptosis whose proteasome-mediated degradation is regulated by p38 MAPK phosphorylation. Ectodomain shedding of transmembrane proteins is regulated by p38 MAPKs as well. In response to inflammatory stimuli, p38 MAPKs phosphorylate the membrane-associated metalloprotease ADAM17. Such phosphorylation is required for ADAM17-mediated ectodomain shedding of TGF-alpha family ligands, which results in the activation of EGFR signaling and cell proliferation. Additional examples of p38 MAPK substrates are the FGFR1. FGFR1 can be translocated from the extracellular space into the cytosol and nucleus of target cells, and regulates processes such as rRNA synthesis and cell growth. FGFR1 translocation requires p38 MAPK activation. In the nucleus, many transcription factors are phosphorylated and activated by p38 MAPKs in response to different stimuli. Classical examples include ATF1, ATF2, ATF6, ELK1, PTPRH, DDIT3, TP53/p53 and MEF2C and MEF2A. The p38 MAPKs are emerging as important modulators of gene expression by regulating chromatin modifiers and remodelers. The promoters of several genes involved in the inflammatory response, such as IL6, IL8 and IL12B, display a p38 MAPK-dependent enrichment of histone H3 phosphorylation on 'Ser-10' (H3S10ph) in LPS-stimulated myeloid cells. This phosphorylation enhances the accessibility of the cryptic NF-kappa-B-binding sites marking promoters for increased NF-kappa-B recruitment. Phosphorylates NLRP1 downstream of MAP3K20/ZAK in response to UV-B irradiation and ribosome collisions, promoting activation of the NLRP1 inflammasome and pyroptosis. Phosphorylates methyltransferase DOT1L on 'Ser-834', 'Thr-900', 'Ser-902', 'Thr-984', 'Ser-1001', 'Ser-1009' and 'Ser-1104'. The sequence is that of Mitogen-activated protein kinase 11 (MAPK11) from Homo sapiens (Human).